We begin with the raw amino-acid sequence, 245 residues long: tRNA1(Val) (adenine(37)-N6)-methyltransferase (245 aa).

The protein belongs to the methyltransferase superfamily. tRNA (adenine-N(6)-)-methyltransferase family.

Its subcellular location is the cytoplasm. The enzyme catalyses adenosine(37) in tRNA1(Val) + S-adenosyl-L-methionine = N(6)-methyladenosine(37) in tRNA1(Val) + S-adenosyl-L-homocysteine + H(+). Specifically methylates the adenine in position 37 of tRNA(1)(Val) (anticodon cmo5UAC). In Shigella dysenteriae serotype 1 (strain Sd197), this protein is tRNA1(Val) (adenine(37)-N6)-methyltransferase.